The sequence spans 257 residues: GTP cyclohydrolase FolE2 (257 aa).

Belongs to the GTP cyclohydrolase IV family.

The enzyme catalyses GTP + H2O = 7,8-dihydroneopterin 3'-triphosphate + formate + H(+). It participates in cofactor biosynthesis; 7,8-dihydroneopterin triphosphate biosynthesis; 7,8-dihydroneopterin triphosphate from GTP: step 1/1. Converts GTP to 7,8-dihydroneopterin triphosphate. The sequence is that of GTP cyclohydrolase FolE2 from Pelobacter propionicus (strain DSM 2379 / NBRC 103807 / OttBd1).